Consider the following 153-residue polypeptide: Lectin-like protein EP153R (153 aa).

The Cytoplasmic portion of the chain corresponds to 1–30 (MYFKKKYIGLIDKNCEKKILDDSSTIKICY). The helical transmembrane segment at 31 to 51 (ILIGILIGTNMITLIYNFIFW) threads the bilayer. Topologically, residues 52-153 (DNYIKCYRNN…YTDLLFICGK (102 aa)) are extracellular. C67 and C78 are disulfide-bonded. 8 N-linked (GlcNAc...) asparagine; by host glycosylation sites follow: N83, N89, N101, N107, N113, N120, N127, and N143. A disulfide bridge connects residues C97 and C151.

This sequence belongs to the asfivirus lectin-like protein family. In terms of assembly, homodimer.

Its subcellular location is the host endoplasmic reticulum membrane. Its function is as follows. Down-regulates MHC-I expression by impairing the appropriate configuration or presentation into the plasma membrane of the latter. Participates in viral hemadsorption, which may help viral spread. Reduces the transactivating activity of host TP53, thus inhibiting apoptosis. Non-essential for virus growth in swine macrophage cell cultures. The sequence is that of Lectin-like protein EP153R from African swine fever virus (strain Badajoz 1971 Vero-adapted) (Ba71V).